The following is a 419-amino-acid chain: Transcription factor 7 (419 aa).

Residues 1-12 (MPQLDSGGGGAG) are compositionally biased toward gly residues. Residues 1 to 60 (MPQLDSGGGGAGRGDDLGAPDELLAFQDEGEEQDDKNRDSPVGPERDLAELKSSLVNESE) are CTNNB1-binding. Disordered regions lie at residues 1–111 (MPQL…LKAP) and 134–200 (PASG…SGFY). Basic and acidic residues-rich tracts occupy residues 35 to 50 (DKNRDSPVGPERDLAE) and 86 to 109 (LGREHTSQRLFPDKLPESLEDGLK). Positions 143–158 (QPQPPLHNKPGQPPHG) are enriched in pro residues. Positions 304-372 (IKKPLNAFML…LHMQLYPGWS (69 aa)) form a DNA-binding region, HMG box. The interval 374–406 (RDNYGKKKRRSREKHQESTTGGKRNAFGTYPEK) is disordered. The short motif at 379 to 385 (KKKRRSR) is the Nuclear localization signal element.

Belongs to the TCF/LEF family. As to quaternary structure, binds the armadillo repeat of CTNNB1 and forms a stable complex. Binds TLE5, TLE1, TLE2, TLE3 and TLE4. Interacts with MLLT11. Interacts with DAZAP2. In terms of assembly, interacts (via N-terminus) with SOX13; inhibits WNT-mediated transcriptional activity. As to expression, T-cell specific. Expressed in triple negative 2 subpopulations of T-cells and both the gamma-delta and alpha-beta T-cell lineages. Expressed in Il7 receptor positive innate-like T-cells in the mesenteric lymph nodes and spleen (at protein level).

It localises to the nucleus. Functionally, transcriptional activator involved in T-cell lymphocyte differentiation. Necessary for the survival of CD4(+) CD8(+) immature thymocytes. Isoforms lacking the N-terminal CTNNB1 binding domain cannot fulfill this role. Binds to the T-lymphocyte-specific enhancer element (5'-WWCAAAG-3') found in the promoter of the CD3E gene. Represses expression of the T-cell receptor gamma gene in alpha-beta T-cell lineages. Inhibits the developmental program of IL17A effector gamma-delta T-cell subsets via regulating the transcription of T-cell lineage effector proteins. Required for the development of natural killer receptor-positive lymphoid tissue inducer T-cells. TLE1, TLE2, TLE3 and TLE4 repress transactivation mediated by TCF7 and CTNNB1. May also act as feedback transcriptional repressor of CTNNB1 and TCF7L2 target genes. The polypeptide is Transcription factor 7 (Mus musculus (Mouse)).